Reading from the N-terminus, the 219-residue chain is Bacterial microcompartment shell protein EutL (219 aa).

BMC circularly permuted domains follow at residues 1 to 113 (MPAL…GAAF) and 114 to 215 (QWAN…ARNP). Ethanolamine is bound by residues Asp45, Asp46, Glu83, and Phe113. The tract at residues 45–46 (DD) is part of the acidic patch lining the small pore. Position 157 (Glu157) interacts with Zn(2+). 183 to 185 (TNY) is a binding site for ethanolamine.

This sequence belongs to the EutL/PduB family. Homotrimerizes to form a pseudohexamer. The trimers form a two-dimensional array about 37 Angstroms thick.

Its subcellular location is the bacterial microcompartment. The protein operates within amine and polyamine degradation; ethanolamine degradation. In terms of biological role, a component of the bacterial microcompartment (BMC) shell dedicated to ethanolamine degradation. Two crystal forms have been seen; a form with a closed central pore that has 3 very small (1.1-2.2 Angstroms) channels per trimer lined by acidic and aromatic residues. A form with a large central pore (8-12 Angstroms) has also been seen; this is probably a functional pore which allows molecules to enter and exit the BMC in a selective, gated manner. Another group only sees the central pore in the presence of Zn(2+); soaking crystals in ZnCl(2) leads to dramatic conformational changes that open a central pore of about 12 Angstroms. Whether Zn(2+) binding is physiologically relevant is unclear, however it suggests a gating mechanism exists. Ethanolamine-binding by the small channels has been hypothesized to stabilize the EutL central pore in a closed (non-transporting) state. An open pore is thought to be large enough to transport ATP and/or cobalamin. The chain is Bacterial microcompartment shell protein EutL (eutL) from Escherichia coli (strain K12).